An 85-amino-acid polypeptide reads, in one-letter code: Exodeoxyribonuclease 7 small subunit (85 aa).

Belongs to the XseB family. Heterooligomer composed of large and small subunits.

The protein localises to the cytoplasm. The enzyme catalyses Exonucleolytic cleavage in either 5'- to 3'- or 3'- to 5'-direction to yield nucleoside 5'-phosphates.. Functionally, bidirectionally degrades single-stranded DNA into large acid-insoluble oligonucleotides, which are then degraded further into small acid-soluble oligonucleotides. The protein is Exodeoxyribonuclease 7 small subunit of Mycobacterium bovis (strain ATCC BAA-935 / AF2122/97).